The primary structure comprises 88 residues: Large ribosomal subunit protein bL27 (88 aa).

It belongs to the bacterial ribosomal protein bL27 family.

The protein is Large ribosomal subunit protein bL27 of Mycobacterium leprae (strain TN).